We begin with the raw amino-acid sequence, 385 residues long: Lipid-A-disaccharide synthase 2 (385 aa).

It belongs to the LpxB family.

The catalysed reaction is a lipid X + a UDP-2-N,3-O-bis[(3R)-3-hydroxyacyl]-alpha-D-glucosamine = a lipid A disaccharide + UDP + H(+). Its pathway is bacterial outer membrane biogenesis; LPS lipid A biosynthesis. Condensation of UDP-2,3-diacylglucosamine and 2,3-diacylglucosamine-1-phosphate to form lipid A disaccharide, a precursor of lipid A, a phosphorylated glycolipid that anchors the lipopolysaccharide to the outer membrane of the cell. This Legionella pneumophila (strain Lens) protein is Lipid-A-disaccharide synthase 2.